We begin with the raw amino-acid sequence, 577 residues long: Moesin (577 aa).

Positions 2-295 (PKTINVRVTT…GNHELYMRRR (294 aa)) constitute an FERM domain. Ser-74 is modified (phosphoserine). The residue at position 79 (Lys-79) is an N6-acetyllysine. Lys-83 carries the N6-succinyllysine modification. Residues 115-120 (IYCPPE) carry the [IL]-x-C-x-x-[DE] motif motif. A Phosphotyrosine modification is found at Tyr-116. Position 117 is an S-nitrosocysteine (Cys-117). 2 positions are modified to N6-acetyllysine: Lys-139 and Lys-165. The span at 376–414 (EQERKRAQSEAEKLAKERQEAEEAKEALLKASRDQKKTQ) shows a compositional bias: basic and acidic residues. 2 disordered regions span residues 376–415 (EQERKRAQSEAEKLAKERQEAEEAKEALLKASRDQKKTQE) and 434–518 (ARQK…NERV). At Ser-407 the chain carries Phosphoserine. Residues 476–487 (AENDQDEQDENG) show a composition bias toward acidic residues. Residues 492–518 (ADLRADAMAKDRSEEERTTEAEKNERV) are compositionally biased toward basic and acidic residues. The residue at position 527 (Ser-527) is a Phosphoserine. Phosphothreonine; by ROCK2 and STK10 is present on Thr-558.

Binds NHERF1. In resting T-cells, part of a PAG1-NHERF1-MSN complex which is disrupted upon TCR activation. Interacts with PPP1R16B. Interacts with PDZD8. Interacts with SELPLG and SYK; mediates the activation of SYK by SELPLG. Interacts with PDPN (via cytoplasmic domain); activates RHOA and promotes epithelial-mesenchymal transition. Interacts with SPN/CD43 cytoplasmic tail, CD44 and ICAM2. In terms of processing, phosphorylation on Thr-558 is crucial for the formation of microvilli-like structures. Phosphorylation by ROCK2 suppresses the head-to-tail association of the N-terminal and C-terminal halves resulting in an opened conformation which is capable of actin and membrane-binding. Phosphorylation on Thr-558 by STK10 negatively regulates lymphocyte migration and polarization. Post-translationally, S-nitrosylation of Cys-117 is induced by interferon-gamma and oxidatively-modified low-densitity lipoprotein (LDL(ox)) implicating the iNOS-S100A8/9 transnitrosylase complex.

It is found in the cell membrane. The protein localises to the cytoplasm. It localises to the cytoskeleton. Its subcellular location is the apical cell membrane. The protein resides in the cell projection. It is found in the microvillus membrane. The protein localises to the microvillus. A head-to-tail association, of the N-terminal and C-terminal halves results in a closed conformation (inactive form) which is incapable of actin or membrane-binding. Functionally, probably involved in connections of major cytoskeletal structures to the plasma membrane. Plays a role in regulating the proliferation, migration, and adhesion of human lymphoid cells and participates in immunologic synapse formation. This Sus scrofa (Pig) protein is Moesin.